A 42-amino-acid polypeptide reads, in one-letter code: CAKKRNWCGKNEDCCCPMKCIYAWYNQQGSCQTTITGLFKKC.

4 disulfide bridges follow: C1/C15, C8/C20, C14/C31, and C16/C42.

It belongs to the neurotoxin 06 (delta-actx) family. Expressed by the venom gland.

The protein resides in the secreted. In terms of biological role, inhibits tetrodotoxin-sensitive voltage-gated sodium channels (Nav) by binding to site 3. It slows the inactivation, causes a prolongation of action potential duration resulting in repetitive firing in autonomic and motor nerve fibers. Does not depolarize the resting potential. Does not affect tetrodotoxin-resistant sodium channels. This lethal neurotoxin is active on both insect and mammalian voltage-gated sodium channels. The protein is Delta-hexatoxin-Ar1a of Atrax robustus (Sydney funnel-web spider).